Consider the following 125-residue polypeptide: Ribosome maturation factor RimP (125 aa).

Belongs to the RimP family.

The protein resides in the cytoplasm. Its function is as follows. Required for maturation of 30S ribosomal subunits. In Rickettsia canadensis (strain McKiel), this protein is Ribosome maturation factor RimP.